The chain runs to 737 residues: O-GlcNAcase BT_4395 (737 aa).

The first 21 residues, 1–21, serve as a signal peptide directing secretion; the sequence is MKNNKIYLLGACLLCAVTTFA. The interval 148-433 is catalytic domain; that stretch reads VRYRGVVEGF…WKDAIRTILP (286 aa). A GH84 domain is found at 149–416; it reads RYRGVVEGFY…SVASYAWNPA (268 aa). Residues glycine 156, lysine 187, and aspartate 263 each coordinate a protein. Residue aspartate 264 is the Proton donor of the active site. A protein contacts are provided by residues tyrosine 303, 358–360, aspartate 365, and asparagine 393; that span reads WWN.

It belongs to the glycosyl hydrolase 84 family. Homodimer.

The enzyme catalyses 3-O-(N-acetyl-beta-D-glucosaminyl)-L-seryl-[protein] + H2O = N-acetyl-D-glucosamine + L-seryl-[protein]. The catalysed reaction is 3-O-(N-acetyl-beta-D-glucosaminyl)-L-threonyl-[protein] + H2O = L-threonyl-[protein] + N-acetyl-D-glucosamine. Its activity is regulated as follows. Inhibited by 1,2-dideoxy-2'-methyl-alpha-D-glucopyranoso-[2,1-d]-delta 2'-thiazoline (NAG-thiazoline) and O-(2-acetamido-2-deoxy-D-glucopyranosylidene)amino-N-phenyl-carbamate (PUGNAc). Not inhibited by Streptozotocin. Its function is as follows. Can hydrolyze the glycosidic link of O-GlcNAcylated proteins. Can use p-nitrophenyl-beta-GlcNAc and 4-methylumbelliferone-GlcNAc as substrates (in vitro). This Bacteroides thetaiotaomicron (strain ATCC 29148 / DSM 2079 / JCM 5827 / CCUG 10774 / NCTC 10582 / VPI-5482 / E50) protein is O-GlcNAcase BT_4395.